Reading from the N-terminus, the 121-residue chain is Large ribosomal subunit protein bL19 (121 aa).

The protein belongs to the bacterial ribosomal protein bL19 family.

In terms of biological role, this protein is located at the 30S-50S ribosomal subunit interface and may play a role in the structure and function of the aminoacyl-tRNA binding site. In Bifidobacterium adolescentis (strain ATCC 15703 / DSM 20083 / NCTC 11814 / E194a), this protein is Large ribosomal subunit protein bL19.